Here is a 365-residue protein sequence, read N- to C-terminus: MSPRPQIKVGVLGATGTVGQRFIELLAAHPYFALHALGASSRSAGQQYARVVRWKLPSPIPDAVRHMVVHECRPDAPGFAECGVVFSGLDADVAGDIENAFRAADLVVYSNAKNYRRDPLCPLIVPLVNPSHLSIIPYQREQLGLKKGYIVTNANCSTTGIVVPLAALEKAFGPLDTVIVTTLQAISGAGYPGVSSLDIMDNVVPLISGEEDKIEWETNKILGGVTPDNKAFDLHAPKQINVSATCTRVPVIDGHTGCVSVKFARSPPPSVAEVENAFREYTCDAQHLGVPSAPAQAIVVHDAPDRPQPRLDKNLHNGACVSVGRIRECPVFDIKFVCLIDNVRLGAATSSIINAEIAVEKGLIQ.

NADP(+)-binding residues include threonine 15, glycine 16, threonine 17, valine 18, serine 40, serine 43, leucine 89, and aspartate 90. Catalysis depends on cysteine 156, which acts as the Acyl-thioester intermediate. Glycine 188 is an NADP(+) binding site. Catalysis depends on histidine 255, which acts as the Proton acceptor. Asparagine 342 is an NADP(+) binding site.

The protein belongs to the aspartate-semialdehyde dehydrogenase family. As to quaternary structure, homotetramer; dimer of dimers.

The protein localises to the cytoplasm. It is found in the cytosol. The protein resides in the nucleus. It carries out the reaction L-aspartate 4-semialdehyde + phosphate + NADP(+) = 4-phospho-L-aspartate + NADPH + H(+). It participates in amino-acid biosynthesis; L-methionine biosynthesis via de novo pathway; L-homoserine from L-aspartate: step 2/3. It functions in the pathway amino-acid biosynthesis; L-threonine biosynthesis; L-threonine from L-aspartate: step 2/5. Its activity is regulated as follows. Inhibited by the competitive inhibitor 1,4-benzoquinone and derivates such as 2-chloro-3-methoxy-1,4-naphthoquinone, 2,3-dichloro-1,4-naphthoquinone, 2-chloro-1,4-naphthoquinone, 2-bromo-1,4-naphthoquinone and 2,3-dichloro-5,8-dihydroxy-1,4-naphthoquinone. Functionally, catalyzes the NADPH-dependent formation of L-aspartate 4-semialdehyde (L-ASA) by the reductive dephosphorylation of 4-phospho-L-aspartate. Mediates the second step in the biosynthesis of amino acids that derive from aspartate (the aspartate family of amino acids), including methioinine and threonine, the latter of which is a precursor to isoleucine. The sequence is that of Aspartate-semialdehyde dehydrogenase from Cryptococcus neoformans var. neoformans serotype D (strain JEC21 / ATCC MYA-565) (Filobasidiella neoformans).